The following is a 454-amino-acid chain: MEEERRDDYKFLRIQDAFKALHLHVNLIGVIVELGFSNGSDCSCTLKIVDPWYSGSGLPVKFVARTIRDLPRVESIGDIILLSRVKIVLINRKITALCNETTSSSFALFNGKHSVDSIPYQSSPKFLMREQDKNFLSNLREWMITYKFEDGSCCFTSLKDIKEGECSNLSCQIVHISKVYKDRWYLFVWDGTEMPPCNILVKSERLPLCVEPEMLPTYMLRKFPTFGSVLRIIVDRVSEKQAIHCLQPGQHVKLLNLFFQVNMGLWNATFTPSTKMQYTMSREMEAFSPQRMCGEKFSPRWNPIARCISRSHSEITGVAHDDAPFVSLMDILTYHNVTAKFRCVVRFIQVYPRDVRKLRDINGNIKLVAILEDATARIHASLYADEGEKFFGCDESDEEALVKKLNRLLGGEEMEKVPRNPPWVQCCLFSFYKHKMDQWESRRFRIFDTWINAS.

It belongs to the telombin family. In terms of assembly, interacts with TRB1, TRB2 and TRB3. In terms of tissue distribution, expressed at low levels in roots, rosette leaves, cauline leaves, stems and flowers.

The protein resides in the nucleus. It is found in the chromosome. Its subcellular location is the telomere. Negatively regulates telomerase activity and participates in chromosome end protection. Binds RNA non-specifically. Associates with a regulatory Pol III-dependent lncRNA, which represses telomerase activity in response to DNA damage. Binds single-stranded telomeric DNA with weak affinity. This is Protection of telomeres protein 1b from Arabidopsis thaliana (Mouse-ear cress).